We begin with the raw amino-acid sequence, 520 residues long: GMP synthase [glutamine-hydrolyzing] (520 aa).

In terms of domain architecture, Glutamine amidotransferase type-1 spans Lys12–Asp205. Cys89 functions as the Nucleophile in the catalytic mechanism. Catalysis depends on residues His179 and Glu181. The region spanning Trp206 to Arg395 is the GMPS ATP-PPase domain. Position 233–239 (Ser233–Ser239) interacts with ATP.

Homodimer.

The enzyme catalyses XMP + L-glutamine + ATP + H2O = GMP + L-glutamate + AMP + diphosphate + 2 H(+). It functions in the pathway purine metabolism; GMP biosynthesis; GMP from XMP (L-Gln route): step 1/1. Functionally, catalyzes the synthesis of GMP from XMP. The chain is GMP synthase [glutamine-hydrolyzing] from Streptococcus uberis (strain ATCC BAA-854 / 0140J).